A 420-amino-acid chain; its full sequence is Tyrosine--tRNA ligase (420 aa).

Tyrosine 33 is an L-tyrosine binding site. The 'HIGH' region signature appears at 38–47; it reads PTADSLHVGH. Positions 167 and 171 each coordinate L-tyrosine. The short motif at 227-231 is the 'KMSKS' region element; that stretch reads KFGKT. Lysine 230 contributes to the ATP binding site. In terms of domain architecture, S4 RNA-binding spans 353–419; it reads LTVADLLVKV…GKRNYALVKV (67 aa).

It belongs to the class-I aminoacyl-tRNA synthetase family. TyrS type 1 subfamily. As to quaternary structure, homodimer.

It is found in the cytoplasm. The enzyme catalyses tRNA(Tyr) + L-tyrosine + ATP = L-tyrosyl-tRNA(Tyr) + AMP + diphosphate + H(+). Catalyzes the attachment of tyrosine to tRNA(Tyr) in a two-step reaction: tyrosine is first activated by ATP to form Tyr-AMP and then transferred to the acceptor end of tRNA(Tyr). The sequence is that of Tyrosine--tRNA ligase from Anaeromyxobacter dehalogenans (strain 2CP-C).